Consider the following 91-residue polypeptide: Small ribosomal subunit protein bS20 (91 aa).

The segment at 1–25 (MANTKSAEKRHRQSLKRRARNVTVR) is disordered. Basic residues predominate over residues 8–20 (EKRHRQSLKRRAR).

It belongs to the bacterial ribosomal protein bS20 family.

In terms of biological role, binds directly to 16S ribosomal RNA. This Myxococcus xanthus (strain DK1622) protein is Small ribosomal subunit protein bS20.